The chain runs to 526 residues: Germ cell-less protein-like 2 (526 aa).

The segment at 1-85 (MGSSSSRVLG…DKQQPLLNTP (85 aa)) is disordered. The short motif at 49-55 (SHKRKRS) is the Nuclear localization signal element. The span at 62-77 (CDPDSHREEHEEEGDK) shows a compositional bias: basic and acidic residues. A Nuclear localization signal motif is present at residues 85-91 (PARKKLR). Residues 108–178 (SDIKICALGE…LYRDDVLIKP (71 aa)) form the BTB domain.

As to quaternary structure, interacts with CUL3. In terms of tissue distribution, expressed predominantly in testis.

The protein resides in the nucleus matrix. Its pathway is protein modification; protein ubiquitination. Possible function in spermatogenesis. Probable substrate-specific adapter of an E3 ubiquitin-protein ligase complex which mediates the ubiquitination and subsequent proteasomal degradation of target proteins. This Homo sapiens (Human) protein is Germ cell-less protein-like 2.